Reading from the N-terminus, the 160-residue chain is MPIAASLRVLLLNGPNLSLLGRREVDVYGTVTLADIERTLQLDAQDLDVELSCLQSNHEGVLIDAIHDAFGRCDGLVINPGGLTHTSVALRDAIAGVGLPTVEVHMSNVYRRESFRHHSFIAPVAVGQISGFGADSYRLGLRAIALFLRRRAEQDEGPCR.

The active-site Proton acceptor is Y28. N79, H85, and D92 together coordinate substrate. H105 acts as the Proton donor in catalysis. Residues 106-107 (MS) and R116 each bind substrate.

Belongs to the type-II 3-dehydroquinase family. In terms of assembly, homododecamer.

It catalyses the reaction 3-dehydroquinate = 3-dehydroshikimate + H2O. It participates in metabolic intermediate biosynthesis; chorismate biosynthesis; chorismate from D-erythrose 4-phosphate and phosphoenolpyruvate: step 3/7. Functionally, catalyzes a trans-dehydration via an enolate intermediate. The protein is 3-dehydroquinate dehydratase of Gloeobacter violaceus (strain ATCC 29082 / PCC 7421).